The sequence spans 968 residues: RNA polymerase-associated protein RapA (968 aa).

Residues D164 to N334 form the Helicase ATP-binding domain. An ATP-binding site is contributed by D177–T184. The DEAH box signature appears at D280–H283. A Helicase C-terminal domain is found at R490 to R685.

It belongs to the SNF2/RAD54 helicase family. RapA subfamily. Interacts with the RNAP. Has a higher affinity for the core RNAP than for the holoenzyme. Its ATPase activity is stimulated by binding to RNAP.

Functionally, transcription regulator that activates transcription by stimulating RNA polymerase (RNAP) recycling in case of stress conditions such as supercoiled DNA or high salt concentrations. Probably acts by releasing the RNAP, when it is trapped or immobilized on tightly supercoiled DNA. Does not activate transcription on linear DNA. Probably not involved in DNA repair. This is RNA polymerase-associated protein RapA from Salmonella paratyphi A (strain ATCC 9150 / SARB42).